Consider the following 2164-residue polypeptide: Hemagglutinin A (2164 aa).

Residues 1 to 25 form the signal peptide; the sequence is MRKLNSLFSLAVLLSLLCWGQTAAA. Peptidase C25-like regions lie at residues 26 to 539, 540 to 991, and 992 to 1443; these read QGGP…TPPP, GGSS…TPPP, and GGTS…TPPP. Disordered stretches follow at residues 493 to 512 and 520 to 541; these read WDAP…LSES and SWKT…PPGG. A compositionally biased stretch (low complexity) spans 496 to 508; it reads PNGTPNPNPGTTT.

Belongs to the peptidase C25 family.

Functionally, agglutinates erythrocytes. The protein is Hemagglutinin A (hagA) of Porphyromonas gingivalis (strain ATCC BAA-308 / W83).